The primary structure comprises 400 residues: MGAPLSTARRGMGQNLSVPNPLGFFPDHQLDPLFRANSSSPDWDFNTNKDNWPMANKVGVGGFGPGFTPPHGGLLGWSPQAQGILTTSPPDPPPASTNRRSGRKPTPVSPPLRDTHPQAMQWNSTQFHQALLDPRVRGLYLPAGGSSSETQNPVPTIASLTSSIFSKTGDPAMNMENITSGLLGPLLVLQAVCFLLTKILTIPQSLDSWWTSLNFLGVPPGCPGQNSQSPISNHLPTSCPPTCPGYRWMCLRRFIIFLFILLLCLIFLLVLLDYQGMLPVCPLLPGSTTTSTGPCKTCTTLAQGTSMFPSCCCTKPSDGNCTCIPIPSSWAFGKYLWEWASARFSWLSLLVQFVQWCVGLSPTVWLLVIWMIWYWGPNLCSILSPFIPLLPIFCYLWASI.

Met1 is modified (N-acetylmethionine). Gly2 carries N-myristoyl glycine; by host lipidation. A pre-S1 region spans residues 2-119 (GAPLSTARRG…PPLRDTHPQA (118 aa)). Residues 2 to 174 (GAPLSTARRG…FSKTGDPAMN (173 aa)) form a pre-S region. The Virion surface; in external conformation segment spans residues 2 to 181 (GAPLSTARRG…AMNMENITSG (180 aa)). The Intravirion; in internal conformation portion of the chain corresponds to 2 to 253 (GAPLSTARRG…PGYRWMCLRR (252 aa)). Pro4 is a glycosylation site (N-linked (GlcNAc...) asparagine). Positions 70 to 115 (PHGGLLGWSPQAQGILTTSPPDPPPASTNRRSGRKPTPVSPPLRDT) are disordered. Positions 79-88 (PQAQGILTTS) are enriched in polar residues. Residues 120–174 (MQWNSTQFHQALLDPRVRGLYLPAGGSSSETQNPVPTIASLTSSIFSKTGDPAMN) form a pre-S2 region. Residues 182-202 (LLGPLLVLQAVCFLLTKILTI) traverse the membrane as a helical segment. Residues 203 to 253 (PQSLDSWWTSLNFLGVPPGCPGQNSQSPISNHLPTSCPPTCPGYRWMCLRR) are Intravirion; in external conformation-facing. A helical membrane pass occupies residues 254 to 274 (FIIFLFILLLCLIFLLVLLDY). Over 275-348 (QGMLPVCPLL…WASARFSWLS (74 aa)) the chain is Virion surface. N-linked (GlcNAc...) asparagine; by host glycosylation is present at Asn320. A helical transmembrane segment spans residues 349-369 (LLVQFVQWCVGLSPTVWLLVI). The Intravirion segment spans residues 370–375 (WMIWYW). The helical transmembrane segment at 376–398 (GPNLCSILSPFIPLLPIFCYLWA) threads the bilayer. The Virion surface segment spans residues 399 to 400 (SI).

The protein belongs to the orthohepadnavirus major surface antigen family. In terms of assembly, in its internal form (Li-HBsAg), interacts with the capsid protein and with the isoform S. Interacts with host chaperone CANX. As to quaternary structure, associates with host chaperone CANX through its pre-S2 N glycan; this association may be essential for isoform M proper secretion. Interacts with isoform L. Interacts with the antigens of satellite virus HDV (HDVAgs); this interaction is required for encapsidation of HDV genomic RNA. Isoform M is N-terminally acetylated by host at a ratio of 90%, and N-glycosylated by host at the pre-S2 region. Post-translationally, myristoylated.

Its subcellular location is the virion membrane. In terms of biological role, the large envelope protein exists in two topological conformations, one which is termed 'external' or Le-HBsAg and the other 'internal' or Li-HBsAg. In its external conformation the protein attaches the virus to cell receptors and thereby initiating infection. This interaction determines the species specificity and liver tropism. This attachment induces virion internalization predominantly through caveolin-mediated endocytosis. The large envelope protein also assures fusion between virion membrane and endosomal membrane. In its internal conformation the protein plays a role in virion morphogenesis and mediates the contact with the nucleocapsid like a matrix protein. The middle envelope protein plays an important role in the budding of the virion. It is involved in the induction of budding in a nucleocapsid independent way. In this process the majority of envelope proteins bud to form subviral lipoprotein particles of 22 nm of diameter that do not contain a nucleocapsid. In Hepatitis B virus genotype H subtype adw4 (isolate Nicaragua/2928Nic/1997) (HBV-H), this protein is Large envelope protein.